A 138-amino-acid chain; its full sequence is Translation initiation factor 2 subunit beta (138 aa).

It belongs to the eIF-2-beta/eIF-5 family. As to quaternary structure, heterotrimer composed of an alpha, a beta and a gamma chain.

Its function is as follows. eIF-2 functions in the early steps of protein synthesis by forming a ternary complex with GTP and initiator tRNA. The polypeptide is Translation initiation factor 2 subunit beta (Methanococcus vannielii (strain ATCC 35089 / DSM 1224 / JCM 13029 / OCM 148 / SB)).